We begin with the raw amino-acid sequence, 302 residues long: Sulfate adenylyltransferase subunit 2 2 (302 aa).

It belongs to the PAPS reductase family. CysD subfamily. Heterodimer composed of CysD, the smaller subunit, and CysN.

It carries out the reaction sulfate + ATP + H(+) = adenosine 5'-phosphosulfate + diphosphate. It functions in the pathway sulfur metabolism; hydrogen sulfide biosynthesis; sulfite from sulfate: step 1/3. In terms of biological role, with CysN forms the ATP sulfurylase (ATPS) that catalyzes the adenylation of sulfate producing adenosine 5'-phosphosulfate (APS) and diphosphate, the first enzymatic step in sulfur assimilation pathway. APS synthesis involves the formation of a high-energy phosphoric-sulfuric acid anhydride bond driven by GTP hydrolysis by CysN coupled to ATP hydrolysis by CysD. In Alkalilimnicola ehrlichii (strain ATCC BAA-1101 / DSM 17681 / MLHE-1), this protein is Sulfate adenylyltransferase subunit 2 2.